A 202-amino-acid polypeptide reads, in one-letter code: Putative 3-methyladenine DNA glycosylase (202 aa).

This sequence belongs to the DNA glycosylase MPG family.

The polypeptide is Putative 3-methyladenine DNA glycosylase (Clostridium botulinum (strain Alaska E43 / Type E3)).